The primary structure comprises 372 residues: N-methyl-L-tryptophan oxidase (372 aa).

Aspartate 4–histidine 34 is a binding site for FAD. At cysteine 308 the chain carries S-8alpha-FAD cysteine.

Belongs to the MSOX/MTOX family. MTOX subfamily. In terms of assembly, monomer. The cofactor is FAD.

The catalysed reaction is N(alpha)-methyl-L-tryptophan + O2 + H2O = L-tryptophan + formaldehyde + H2O2. Functionally, catalyzes the oxidative demethylation of N-methyl-L-tryptophan. This chain is N-methyl-L-tryptophan oxidase, found in Shigella flexneri serotype 5b (strain 8401).